We begin with the raw amino-acid sequence, 156 residues long: Ribosomal RNA large subunit methyltransferase H (156 aa).

S-adenosyl-L-methionine-binding positions include Leu-73, Gly-104, and 123 to 128 (IGPLTL).

This sequence belongs to the RNA methyltransferase RlmH family. In terms of assembly, homodimer.

It is found in the cytoplasm. The catalysed reaction is pseudouridine(1915) in 23S rRNA + S-adenosyl-L-methionine = N(3)-methylpseudouridine(1915) in 23S rRNA + S-adenosyl-L-homocysteine + H(+). Specifically methylates the pseudouridine at position 1915 (m3Psi1915) in 23S rRNA. This is Ribosomal RNA large subunit methyltransferase H from Xanthomonas euvesicatoria pv. vesicatoria (strain 85-10) (Xanthomonas campestris pv. vesicatoria).